The sequence spans 199 residues: Thymidine kinase (199 aa).

ATP-binding positions include 23–30 (GSMFSGKT) and 95–98 (DEAQ). Glutamate 96 acts as the Proton acceptor in catalysis. The Zn(2+) site is built by cysteine 152, cysteine 155, cysteine 184, and cysteine 187.

The protein belongs to the thymidine kinase family. Homotetramer.

It localises to the cytoplasm. It catalyses the reaction thymidine + ATP = dTMP + ADP + H(+). This chain is Thymidine kinase, found in Bacteroides fragilis (strain ATCC 25285 / DSM 2151 / CCUG 4856 / JCM 11019 / LMG 10263 / NCTC 9343 / Onslow / VPI 2553 / EN-2).